Reading from the N-terminus, the 159-residue chain is Growth arrest and DNA damage-inducible protein GADD45 gamma (159 aa).

Residues 43-86 form a homodimerization region; it reads VYESAKVLNVDPDNVTFCVLAADEEDEGDIALQIHFTLIQAFCC.

The protein belongs to the GADD45 family. In terms of assembly, undergoes concentration-dependent homodimerization, which is required for growth inhibititory activity and enhances interaction with PCNA. Interacts with GADD45GIP1. Interacts with PCNA.

Involved in the regulation of growth and apoptosis. Mediates activation of stress-responsive MTK1/MEKK4 MAPKKK. The protein is Growth arrest and DNA damage-inducible protein GADD45 gamma (Gadd45g) of Rattus norvegicus (Rat).